The primary structure comprises 175 residues: Chorismate pyruvate-lyase (175 aa).

Positions 36, 78, 116, and 157 each coordinate substrate.

The protein belongs to the UbiC family. In terms of assembly, monomer.

It localises to the cytoplasm. It carries out the reaction chorismate = 4-hydroxybenzoate + pyruvate. It functions in the pathway cofactor biosynthesis; ubiquinone biosynthesis. Removes the pyruvyl group from chorismate, with concomitant aromatization of the ring, to provide 4-hydroxybenzoate (4HB) for the ubiquinone pathway. This is Chorismate pyruvate-lyase from Hamiltonella defensa subsp. Acyrthosiphon pisum (strain 5AT).